The chain runs to 131 residues: ATP synthase epsilon chain (131 aa).

It belongs to the ATPase epsilon chain family. As to quaternary structure, F-type ATPases have 2 components, CF(1) - the catalytic core - and CF(0) - the membrane proton channel. CF(1) has five subunits: alpha(3), beta(3), gamma(1), delta(1), epsilon(1). CF(0) has three main subunits: a, b and c.

The protein resides in the cell inner membrane. Functionally, produces ATP from ADP in the presence of a proton gradient across the membrane. This is ATP synthase epsilon chain from Wolinella succinogenes (strain ATCC 29543 / DSM 1740 / CCUG 13145 / JCM 31913 / LMG 7466 / NCTC 11488 / FDC 602W) (Vibrio succinogenes).